The following is a 325-amino-acid chain: tRNA dimethylallyltransferase (325 aa).

21–28 (GPTASGKS) is an ATP binding site. Residue 23-28 (TASGKS) participates in substrate binding. The interaction with substrate tRNA stretch occupies residues 166 to 170 (QRLAR).

This sequence belongs to the IPP transferase family. Monomer. It depends on Mg(2+) as a cofactor.

It catalyses the reaction adenosine(37) in tRNA + dimethylallyl diphosphate = N(6)-dimethylallyladenosine(37) in tRNA + diphosphate. Its function is as follows. Catalyzes the transfer of a dimethylallyl group onto the adenine at position 37 in tRNAs that read codons beginning with uridine, leading to the formation of N6-(dimethylallyl)adenosine (i(6)A). This chain is tRNA dimethylallyltransferase, found in Acidiphilium cryptum (strain JF-5).